A 1404-amino-acid chain; its full sequence is MKDLLKIFKSQIKTDEFDAIKIALASPDMIRSWSFGEVKKPETINYRTFKPERDGLFCARIFGPVKDYECLCGKYKRLKHRGVICEKCGVEVTQSKVRRERMGHIELATPIAHIWFLKSLPSRIGLLLDMPLRDIERVLYFESYVIVNEGLTNLEKNQILSEEQYLNALEKFGDEFDAKMGAEAIKLLLNSINLKQECNKLRDELNNSNSETKRKKLTKRIKLLESFIHSNNKPEWMILTVLPILPPDLRPLVPLDGGRFATSDLNDLYRRVINRNNRLKRLLELSAPDIIVRNEKRMLQEAIDALLDNGRRGRAITGSNKRPLKSLADMIKGKQGRFRQNLLGKRVDYSGRSVITVGPYLRLHQCGLPKKMALELFKPFIYGKLEKKGLATTIKAAKKMVEREESIVWDILDEVIHEHPVLLNRAPTLHRLGIQAFEPILIEGKAIQLHPLVCAAYNADFDGDQMAVHVPLTKEAQYEARSLMMSTNNILSPANGEPIIVPSQDVVLGLYYMTRKKINAKGEGMIFKNSKEAEKSYQMGFSELHAEVQVRITEYKKIDKQNFLKNTKIENTTIGRAILWMIVPKGLPFFMVNKILGKKSISKLLNTCYRILGLKSTVNFADQIMYTGFNYAARSGSSVGIDDMEIPKKKSDIISEAEIEVSEIQEQFQSGLVTAGERYNKVIDIWAAANERVSKAMMKNLSTESTTNKQGNEEKQISFNSIFMMADSGARGSAAQIRQLAGMRGLMAKPDGSIIETPITANFREGLNVLQYFISTHGARKGLADTALKTANSGYLTRRLVDVAQDLVVTEDDCNTHKGIIMTSVIEGGDVKESLREKALGRVTAENIIKPYSSDILITRNTLLNEKWCNVLEKYSIDSIKVRSVVHCDTNFGVCANCYGRDLARGNLVNKGEAIGVIAAQSIGEPGTQLTMRTFHIGGAASRAASESSIQVKNSGIIKLHNAKSVINSEGKIVITSRNVELKILDKFRRTKESYKVPYGAIIAKMDEELVNSGEIVAKWDPHTIPVISEVNGYIEFVDMIDGQSITRQTDELTGLTSIVILDTSERTSLGKDLRPALKIVDSNGENVLISGTDMPAQYFLPGKSIVQVDNSIKISSGDTLARIPQESGGTKDITGGLPRVADLFEARRPKELAILAEISGFISFGKDTKGKRRLIITPYNNNTPYEEMIPKWRQLNVFEGERVEKGDVISDGPESPHDILRLRGVQAVTKYIINEVQEVYRLQGVKINDKHIEVIIRQMLRKATIIKSEHSEFLDGEQVEYSRIKVSNRNLSKIGKKTAIFSRDLLGITKASLATESFISAASFQETTRVLTESSVAGKKDELRGLKENVIVGRLIPAGTGYAYHKKRLKNCQKDKTKEKNKPSSISVEEASANLSELLNSTL.

4 residues coordinate Zn(2+): Cys70, Cys72, Cys85, and Cys88. Mg(2+) is bound by residues Asp460, Asp462, and Asp464. 4 residues coordinate Zn(2+): Cys814, Cys888, Cys895, and Cys898.

Belongs to the RNA polymerase beta' chain family. As to quaternary structure, the RNAP catalytic core consists of 2 alpha, 1 beta, 1 beta' and 1 omega subunit. When a sigma factor is associated with the core the holoenzyme is formed, which can initiate transcription. Requires Mg(2+) as cofactor. Zn(2+) is required as a cofactor.

The enzyme catalyses RNA(n) + a ribonucleoside 5'-triphosphate = RNA(n+1) + diphosphate. Functionally, DNA-dependent RNA polymerase catalyzes the transcription of DNA into RNA using the four ribonucleoside triphosphates as substrates. The chain is DNA-directed RNA polymerase subunit beta' from Buchnera aphidicola subsp. Baizongia pistaciae (strain Bp).